The chain runs to 593 residues: Transcriptional repressor p66-beta (593 aa).

Residue Ser17 is modified to Phosphoserine. Glycyl lysine isopeptide (Lys-Gly) (interchain with G-Cter in SUMO2) cross-links involve residues Lys33, Lys66, and Lys97. Positions Glu62–Pro123 are disordered. Composition is skewed to basic and acidic residues over residues Gly74–Ile100 and Ser108–Arg118. Thr120 carries the phosphothreonine modification. Ser122, Ser129, Ser134, and Ser135 each carry phosphoserine. Residues Ser140–Glu194 are a coiled coil. Lys147 participates in a covalent cross-link: Glycyl lysine isopeptide (Lys-Gly) (interchain with G-Cter in SUMO2). Positions Leu165–Asn195 are CR1; interaction with MBD2 and MBD3. A Glycyl lysine isopeptide (Lys-Gly) (interchain with G-Cter in SUMO2) cross-link involves residue Lys199. Ser208 carries the post-translational modification Phosphoserine. Residues Ser213 to Glu235 form a disordered region. Lys281 participates in a covalent cross-link: Glycyl lysine isopeptide (Lys-Gly) (interchain with G-Cter in SUMO2). Phosphoserine is present on residues Ser333, Ser338, and Ser340. The tract at residues Ser340–Gln480 is CR2; histone tail-binding. Residues Lys353, Lys454, and Lys467 each participate in a glycyl lysine isopeptide (Lys-Gly) (interchain with G-Cter in SUMO2) cross-link. The GATA-type zinc-finger motif lies at Arg414–Lys467. The stretch at Gln449–Gln482 forms a coiled coil. Ser486 is subject to Phosphoserine. Residue Lys498 forms a Glycyl lysine isopeptide (Lys-Gly) (interchain with G-Cter in SUMO2) linkage.

Homooligomer. Component of the nucleosome remodeling and deacetylase (NuRD) repressor complex, composed of core proteins MTA1, MTA2, MTA3, RBBP4, RBBP7, HDAC1, HDAC2, MBD2, MBD3, and peripherally associated proteins CDK2AP1, CDK2AP2, GATAD2A, GATAD2B, CHD3, CHD4 and CHD5. The exact stoichiometry of the NuRD complex is unknown, and some subunits such as MBD2 and MBD3, GATAD2A and GATAD2B, and CHD3, CHD4 and CHD5 define mutually exclusive NuRD complexes. Interacts with MBD2; this is required for the enhancement of MBD2-mediated repression and for targeting to the chromatin. Interacts with MBD3. Component of the MeCP1 histone deacetylase complex. Interacts with histone tails, including that of histones H2A, H2B, H3 and H4. Interacts with ERCC6. As to expression, widely expressed.

The protein resides in the nucleus speckle. It is found in the nucleus. Its subcellular location is the chromosome. Transcriptional repressor. Acts as a component of the histone deacetylase NuRD complex which participates in the remodeling of chromatin. Enhances MBD2-mediated repression. Efficient repression requires the presence of GATAD2A. Targets MBD3 to discrete loci in the nucleus. May play a role in synapse development. The protein is Transcriptional repressor p66-beta (GATAD2B) of Homo sapiens (Human).